The following is a 256-amino-acid chain: Thiazole synthase (256 aa).

Catalysis depends on lysine 95, which acts as the Schiff-base intermediate with DXP. 1-deoxy-D-xylulose 5-phosphate is bound by residues glycine 156, 182-183, and 204-205; these read AG and NT.

This sequence belongs to the ThiG family. As to quaternary structure, homotetramer. Forms heterodimers with either ThiH or ThiS.

The protein resides in the cytoplasm. The enzyme catalyses [ThiS sulfur-carrier protein]-C-terminal-Gly-aminoethanethioate + 2-iminoacetate + 1-deoxy-D-xylulose 5-phosphate = [ThiS sulfur-carrier protein]-C-terminal Gly-Gly + 2-[(2R,5Z)-2-carboxy-4-methylthiazol-5(2H)-ylidene]ethyl phosphate + 2 H2O + H(+). The protein operates within cofactor biosynthesis; thiamine diphosphate biosynthesis. Functionally, catalyzes the rearrangement of 1-deoxy-D-xylulose 5-phosphate (DXP) to produce the thiazole phosphate moiety of thiamine. Sulfur is provided by the thiocarboxylate moiety of the carrier protein ThiS. In vitro, sulfur can be provided by H(2)S. This is Thiazole synthase from Shigella boydii serotype 18 (strain CDC 3083-94 / BS512).